The sequence spans 147 residues: Deoxyuridine 5'-triphosphate nucleotidohydrolase (147 aa).

Substrate contacts are provided by residues 67–69 (RSG), asparagine 80, and 84–86 (TID).

This sequence belongs to the dUTPase family. The cofactor is Mg(2+).

The enzyme catalyses dUTP + H2O = dUMP + diphosphate + H(+). It participates in pyrimidine metabolism; dUMP biosynthesis; dUMP from dCTP (dUTP route): step 2/2. Its function is as follows. This enzyme is involved in nucleotide metabolism: it produces dUMP, the immediate precursor of thymidine nucleotides and it decreases the intracellular concentration of dUTP so that uracil cannot be incorporated into DNA. The chain is Deoxyuridine 5'-triphosphate nucleotidohydrolase from Anaeromyxobacter dehalogenans (strain 2CP-1 / ATCC BAA-258).